The primary structure comprises 193 residues: Thymidine kinase (193 aa).

Residues 9–16 and 87–90 contribute to the ATP site; these read SAMNAGKS and DEAQ. Glutamate 88 (proton acceptor) is an active-site residue. Cysteine 145, cysteine 147, cysteine 182, and histidine 185 together coordinate Zn(2+).

The protein belongs to the thymidine kinase family. In terms of assembly, homotetramer.

The protein localises to the cytoplasm. It catalyses the reaction thymidine + ATP = dTMP + ADP + H(+). The chain is Thymidine kinase from Idiomarina loihiensis (strain ATCC BAA-735 / DSM 15497 / L2-TR).